The chain runs to 336 residues: C2H2 finger domain transcription factor mtfA (336 aa).

Residues 1–245 (MDVASLISPS…PSPGHQQMIS (245 aa)) form a disordered region. Composition is skewed to polar residues over residues 7 to 29 (ISPSESDTVPTFRSRSIQNSSAS) and 36 to 56 (EQSTGSYFSAVPTHTTSYSRT). Low complexity predominate over residues 136-149 (SPSTSSVSAASSSA). The segment covering 168 to 181 (TDRSSISSQGSVQH) has biased composition (polar residues). Residues 182–210 (AASAPYASPAPSVSSFSSPIEPSTPSTAA) are compositionally biased toward low complexity. A compositionally biased stretch (polar residues) spans 216–245 (PAPNTFQNPSPFPQTSTASLPSPGHQQMIS). 2 consecutive C2H2-type zinc fingers follow at residues 272–294 (YICRTCHKAFSRPSSLRIHSHSH) and 300–325 (FRCTHAGCGKAFSVRSNMKRHERGCH).

It is found in the nucleus. Transcription factor that controls morphogenesis and virulence. Acts as a positive regulator of gliotixin and protease production. The polypeptide is C2H2 finger domain transcription factor mtfA (Aspergillus fumigatus (strain CBS 144.89 / FGSC A1163 / CEA10) (Neosartorya fumigata)).